The sequence spans 271 residues: Solute carrier family 66 member 2 (271 aa).

The next 3 membrane-spanning stretches (helical) occupy residues Trp-8–Gly-28, Phe-49–Phe-69, and Pro-76–Thr-96. Residues His-14–Gln-80 enclose the PQ-loop 1 domain. Phosphoserine is present on Ser-110. The next 3 helical transmembrane spans lie at Asp-145–Ile-165, Ala-168–Pro-188, and Val-232–Ala-252. Residues Ala-178 to Cys-233 form the PQ-loop 2 domain.

Its subcellular location is the membrane. The polypeptide is Solute carrier family 66 member 2 (Homo sapiens (Human)).